Consider the following 94-residue polypeptide: Small ribosomal subunit protein bS18 (94 aa).

This sequence belongs to the bacterial ribosomal protein bS18 family. Part of the 30S ribosomal subunit. Forms a tight heterodimer with protein bS6.

Functionally, binds as a heterodimer with protein bS6 to the central domain of the 16S rRNA, where it helps stabilize the platform of the 30S subunit. The chain is Small ribosomal subunit protein bS18 from Acetivibrio thermocellus (strain ATCC 27405 / DSM 1237 / JCM 9322 / NBRC 103400 / NCIMB 10682 / NRRL B-4536 / VPI 7372) (Clostridium thermocellum).